Reading from the N-terminus, the 249-residue chain is Pyridoxine 5'-phosphate synthase (249 aa).

Asn7 contacts 3-amino-2-oxopropyl phosphate. 1-deoxy-D-xylulose 5-phosphate is bound at residue 9–10 (DH). Arg18 is a binding site for 3-amino-2-oxopropyl phosphate. His43 serves as the catalytic Proton acceptor. 2 residues coordinate 1-deoxy-D-xylulose 5-phosphate: Arg45 and His50. Catalysis depends on Glu70, which acts as the Proton acceptor. Residue Thr100 coordinates 1-deoxy-D-xylulose 5-phosphate. Catalysis depends on His190, which acts as the Proton donor. Residues Gly191 and 212-213 (GH) each bind 3-amino-2-oxopropyl phosphate.

This sequence belongs to the PNP synthase family. Homooctamer; tetramer of dimers.

The protein resides in the cytoplasm. The catalysed reaction is 3-amino-2-oxopropyl phosphate + 1-deoxy-D-xylulose 5-phosphate = pyridoxine 5'-phosphate + phosphate + 2 H2O + H(+). Its pathway is cofactor biosynthesis; pyridoxine 5'-phosphate biosynthesis; pyridoxine 5'-phosphate from D-erythrose 4-phosphate: step 5/5. In terms of biological role, catalyzes the complicated ring closure reaction between the two acyclic compounds 1-deoxy-D-xylulose-5-phosphate (DXP) and 3-amino-2-oxopropyl phosphate (1-amino-acetone-3-phosphate or AAP) to form pyridoxine 5'-phosphate (PNP) and inorganic phosphate. The protein is Pyridoxine 5'-phosphate synthase of Synechococcus sp. (strain CC9902).